The chain runs to 474 residues: Aspartate ammonia-lyase (474 aa).

Residues Thr105, Ser144, Thr145, Asn146, and Thr191 each coordinate L-aspartate. The tract at residues 322 to 331 is SS loop; sequence GSSIMPGKVN. The Proton acceptor role is filled by Ser323. 2 residues coordinate L-aspartate: Ser324 and Lys329.

The protein belongs to the class-II fumarase/aspartase family. Aspartase subfamily. In terms of assembly, homotetramer.

It carries out the reaction L-aspartate = fumarate + NH4(+). The catalysed reaction is L-phenylalanine = (E)-cinnamate + NH4(+). Does not require any divalent metal ion for activation of catalysis, but the activity is slightly increased in the presence of Mg(2+), Mn(2+), Ca(2+) or Co(2+). Functionally, catalyzes the reversible conversion of L-aspartate to fumarate and ammonia. Can also utilize L-phenylalanine to form cinnamic acid. Exhibits the highest specific activity towards L-phenylalanine, but catalytic efficiency is 3-fold higher with L-aspartate. The polypeptide is Aspartate ammonia-lyase (Pseudomonas aeruginosa (strain ATCC 15692 / DSM 22644 / CIP 104116 / JCM 14847 / LMG 12228 / 1C / PRS 101 / PAO1)).